Reading from the N-terminus, the 346-residue chain is Putative cytochrome bd menaquinol oxidase subunit II (346 aa).

9 helical membrane passes run 7–27 (ALIA…MATM), 63–83 (VFIV…TFVL), 87–107 (LLIP…FLVF), 119–139 (YISG…LPVT), 164–184 (AYSF…LLLA), 201–221 (KSAL…MVTM), 236–256 (FSWI…LFLP), 269–289 (LALV…GRAH), and 312–332 (ALFA…FFFW).

Belongs to the cytochrome ubiquinol oxidase subunit 2 family.

It is found in the cell membrane. Functionally, may have a role in sporulation. Can compensate for the loss of cytochrome aa3. The chain is Putative cytochrome bd menaquinol oxidase subunit II (ythB) from Bacillus subtilis (strain 168).